Reading from the N-terminus, the 141-residue chain is Histone H2B (141 aa).

Over residues 1-10 (MAPKAAEKKP) the composition is skewed to basic and acidic residues. The tract at residues 1-49 (MAPKAAEKKPSTGGKAPAGGKAPAEKKEAGKKTAAAASGDKKKRGKTRK) is disordered. N6-acetyllysine; alternate occurs at positions 8 and 9. Residues lysine 8 and lysine 9 each participate in a glycyl lysine isopeptide (Lys-Gly) (interchain with G-Cter in SUMO); alternate cross-link. The segment covering 11 to 22 (STGGKAPAGGKA) has biased composition (low complexity). At lysine 15 the chain carries N6-acetyllysine. Residue lysine 26 is modified to N6-acetyllysine; alternate. Lysine 26 is covalently cross-linked (Glycyl lysine isopeptide (Lys-Gly) (interchain with G-Cter in SUMO); alternate). Lysine 27 participates in a covalent cross-link: Glycyl lysine isopeptide (Lys-Gly) (interchain with G-Cter in SUMO). Residue lysine 135 forms a Glycyl lysine isopeptide (Lys-Gly) (interchain with G-Cter in ubiquitin) linkage.

This sequence belongs to the histone H2B family. In terms of assembly, the nucleosome is a histone octamer containing two molecules each of H2A, H2B, H3 and H4 assembled in one H3-H4 heterotetramer and two H2A-H2B heterodimers. The octamer wraps approximately 147 bp of DNA. In terms of processing, monoubiquitinated by the ubc2-bre1 complex to form H2BK123ub1. H2BK123ub1 gives a specific tag for epigenetic transcriptional activation and is also prerequisite for H3K4me and H3K79me formation. H2BK123ub1 also modulates the formation of double-strand breaks during meiosis and is a prerequisite for DNA-damage checkpoint activation. Acetylated by gcn5 to form H2BK11ac and H2BK16ac. H2BK16ac can also be formed by esa1. Acetylation of N-terminal lysines and particularly formation of H2BK11acK16ac has a positive effect on transcription. Post-translationally, sumoylation to form H2BK6su or H2BK7su, and probably also H2BK16su or H2BK17su, occurs preferentially near the telomeres and represses gene transcription.

Its subcellular location is the nucleus. It localises to the chromosome. In terms of biological role, core component of nucleosome. Nucleosomes wrap and compact DNA into chromatin, limiting DNA accessibility to the cellular machineries which require DNA as a template. Histones thereby play a central role in transcription regulation, DNA repair, DNA replication and chromosomal stability. DNA accessibility is regulated via a complex set of post-translational modifications of histones, also called histone code, and nucleosome remodeling. In Aspergillus oryzae (strain ATCC 42149 / RIB 40) (Yellow koji mold), this protein is Histone H2B (htb1).